The following is a 497-amino-acid chain: MMKTLTRSILDLTRSSKNAVSIQCGRRFISSIKATNLDNALLVYGEIPNKSYLQVRGPDTIGFLNGLVTSKLLPTFVKKNLTTIEVSDEKNKKDTNNNESPEFNEKKGNWGIYNAESHNGPYLSRFGIYSAFLNGKGKLVTDSIIYPSPGVVNDQTEAKIKLYPEYLLEFDKDIIPRMLTSFESHKLHNKIKFEEVKNTKTWDFFISFPGLTQNDPNPWIDNVYVPLTYLKNAEASNEFAESFITSLFPKISNKILGFYIERRTETLLNNDGTAPQFFRIVTTEDVDNAFDAFNSEAFPFTFEKLEKDSSFFKQCKLQYGFLDGSDAIQPDSLMPLELNFDYFPNTVSNNKGCYVGQELTARTYSTGILRKRLIPIEFENLSEQAVKLLNECDKYPDIEVEVDPKNQEPEPLQSTAPSPFGNSPFGNASTKLRQRKKAAGTLISFDGKYGIALFRIEHFKNIYDTPTPSKFFLTIGQEKIDVTPQRPIWYNEWKSSQ.

The N-terminal 36 residues, 1 to 36 (MMKTLTRSILDLTRSSKNAVSIQCGRRFISSIKATN), are a transit peptide targeting the mitochondrion. 2 disordered regions span residues 88–107 (DEKNKKDTNNNESPEFNEKK) and 404–428 (PKNQEPEPLQSTAPSPFGNSPFGNA). The segment covering 412-428 (LQSTAPSPFGNSPFGNA) has biased composition (polar residues).

Belongs to the GcvT family. CAF17/IBA57 subfamily.

The protein resides in the mitochondrion matrix. The polypeptide is Iron-sulfur cluster assembly factor IBA57 homolog, mitochondrial (CAF17) (Candida glabrata (strain ATCC 2001 / BCRC 20586 / JCM 3761 / NBRC 0622 / NRRL Y-65 / CBS 138) (Yeast)).